Reading from the N-terminus, the 85-residue chain is UPF0291 protein SPCG_1462 (85 aa).

Positions 62–85 (TPEKLRQVQREKGLHGRSLDDPNS) are disordered.

This sequence belongs to the UPF0291 family.

Its subcellular location is the cytoplasm. The protein is UPF0291 protein SPCG_1462 of Streptococcus pneumoniae (strain CGSP14).